Here is a 244-residue protein sequence, read N- to C-terminus: Large ribosomal subunit protein uL30w (244 aa).

Belongs to the universal ribosomal protein uL30 family.

The polypeptide is Large ribosomal subunit protein uL30w (RPL7D) (Arabidopsis thaliana (Mouse-ear cress)).